The primary structure comprises 650 residues: Alpha-agglutinin (650 aa).

Positions 1–19 are cleaved as a signal peptide; that stretch reads MFTFLKIILWLFSLALASA. Residues asparagine 79, asparagine 109, asparagine 135, and asparagine 248 are each glycosylated (N-linked (GlcNAc...) asparagine). Cysteine 97 and cysteine 114 are joined by a disulfide. Cysteine 202 and cysteine 300 are joined by a disulfide. Residues 216–322 are ig-like fold domain important for alpha-agglutinin activity, contributing to a functional binding site for a-agglutinin; sequence YDSSNNNVDL…FSTTREFIVY (107 aa). Serine 282 carries O-linked (Man...) serine glycosylation. Threonine 289, threonine 299, and threonine 303 each carry an O-linked (Man...) threonine glycan. The N-linked (GlcNAc...) asparagine glycan is linked to asparagine 306. O-linked (Man...) threonine glycosylation is found at threonine 307, threonine 308, and threonine 311. Residue serine 314 is glycosylated (O-linked (Man...) serine). Residues threonine 315, threonine 316, and threonine 329 are each glycosylated (O-linked (Man...) threonine). 4 O-linked (Man...) serine glycosylation sites follow: serine 331, serine 334, serine 335, and serine 338. 5 O-linked (Man...) threonine glycosylation sites follow: threonine 339, threonine 340, threonine 341, threonine 342, and threonine 345. 2 tandem repeats follow at residues 339 to 378 and 384 to 423. Residues 339–423 are 2 X 40 AA tandem repeats; that stretch reads TTTTDLTSIN…EVISDVETIS (85 aa). The O-linked (Man...) serine glycan is linked to serine 346. Threonine 349 carries O-linked (Man...) threonine glycosylation. Serine 350 carries O-linked (Man...) serine glycosylation. N-linked (GlcNAc...) asparagine glycosylation is found at asparagine 364, asparagine 402, asparagine 485, asparagine 501, and asparagine 614. Glycine 627 is lipidated: GPI-anchor amidated glycine. Residues 628–650 constitute a propeptide, removed in mature form; that stretch reads KASIFFSAELGSIIFLLLSYLLF.

To C.albicans ALS1. As to quaternary structure, interacts with AGA2. In terms of processing, N-glycosylated, and O-glycosylated by both PMT1 and PMT2. The GPI-anchor is attached to the protein in the endoplasmic reticulum and serves to target the protein to the cell surface. There, the glucosamine-inositol phospholipid moiety is cleaved off and the GPI-modified mannoprotein is covalently attached via its lipidless GPI glycan remnant to the 1,6-beta-glucan of the outer cell wall layer.

It is found in the secreted. Its subcellular location is the cell wall. The protein localises to the membrane. Functionally, cell surface glycoprotein promoting cell-cell contact to facilitate mating. S.cerevisiae A and alpha cells express the complementary cell surface glycoproteins A-agglutinin and alpha-, respectively, which interact with one another to promote cellular aggregation during mating. This chain is Alpha-agglutinin (SAG1), found in Saccharomyces cerevisiae (strain ATCC 204508 / S288c) (Baker's yeast).